The primary structure comprises 178 residues: N-alpha-acetyltransferase 20 (178 aa).

The N-acetyltransferase domain maps to 2-157 (TTLRAFTCDD…DAYDMRKALS (156 aa)). The disordered stretch occupies residues 159-178 (DTEKKSIVPLPHPVRPEDIE).

Belongs to the acetyltransferase family. ARD1 subfamily. Component of the N-terminal acetyltransferase B (NatB) complex which is composed of naa20 and naa25.

The protein resides in the cytoplasm. The protein localises to the nucleus. It catalyses the reaction N-terminal L-methionyl-L-asparaginyl-[protein] + acetyl-CoA = N-terminal N(alpha)-acetyl-L-methionyl-L-asparaginyl-[protein] + CoA + H(+). The enzyme catalyses N-terminal L-methionyl-L-glutaminyl-[protein] + acetyl-CoA = N-terminal N(alpha)-acetyl-L-methionyl-L-glutaminyl-[protein] + CoA + H(+). It carries out the reaction N-terminal L-methionyl-L-aspartyl-[protein] + acetyl-CoA = N-terminal N(alpha)-acetyl-L-methionyl-L-aspartyl-[protein] + CoA + H(+). The catalysed reaction is N-terminal L-methionyl-L-glutamyl-[protein] + acetyl-CoA = N-terminal N(alpha)-acetyl-L-methionyl-L-glutamyl-[protein] + CoA + H(+). Its function is as follows. Catalytic subunit of the NatB complex which catalyzes acetylation of the N-terminal methionine residues of peptides beginning with Met-Asp, Met-Glu, Met-Asn and Met-Gln. Proteins with cell cycle functions are overrepresented in the pool of NatB substrates. Required for maintaining the structure and function of actomyosin fibers and for proper cellular migration. The sequence is that of N-alpha-acetyltransferase 20 (naa20) from Xenopus laevis (African clawed frog).